The following is a 442-amino-acid chain: MAEEERALLGPDGGDGGSAAPPRALPAVCDPSRLPHRLLVLALMCFLGFGSCFCYDNPAALQTQVQGDMKVNTARFMALYAWLGTVIFSIFVCVGQVIFALGALVNAFWLMEVGRFIFGIGGESLAVAQNTYAVSWFKGKELNLVFGLQLSMARIGSTVNMNIMGWIYSRVQDLLGHTGHATLGLTLLIGGITCLFSLACALILAYLDKRAEKLLCKEQGKTGEVIKLTDVKNFSLSLWLIFVICVCYYAAVFPFIGLGKVFFIEKFQFSSQEASAINSVVYIISAPMSPVFGILVDKVGKNIIWVLCAVITTLASHIMLAFTFWNPWIAMCLLGVAYSLLACALWPMVAFVVPEHQLGTAYGFMQSIQNLGLAVIAIAAGMILDTRGYLFLEVFFSACVSLSLVAVVMLYFVNHLTGGDLNWSAKKREKLQKVAANDLLYC.

A Dileucine internalization motif motif is present at residues L8–L9. 10 helical membrane-spanning segments follow: residues L38–P58, T85–V105, A107–V127, L187–L207, L238–L258, A276–V296, I303–T323, L333–V353, F364–L384, and L390–L410.

Belongs to the major facilitator superfamily. Homodimer. Interacts with lysosomal protein GLMP (via lumenal domain); the interaction starts while both proteins are still in the endoplasmic reticulum and is required for stabilization of MFSD1 in lysosomes but has no direct effect on its targeting to lysosomes or transporter activity.

It is found in the lysosome membrane. The enzyme catalyses L-alpha-aminoacyl-L-arginine(out) = L-alpha-aminoacyl-L-arginine(in). It carries out the reaction L-arginyl-L-alpha-amino acid(out) = L-arginyl-L-alpha-amino acid(in). The catalysed reaction is L-arginyl-glycine(out) = L-arginyl-glycine(in). It catalyses the reaction L-alpha-aminoacyl-L-lysine(out) = L-alpha-aminoacyl-L-lysine(in). The enzyme catalyses L-aspartyl-L-lysine(out) = L-aspartyl-L-lysine(in). It carries out the reaction L-alanyl-L-lysine(out) = L-alanyl-L-lysine(in). The catalysed reaction is L-lysyl-L-alpha-amino acid(out) = L-lysyl-L-alpha-amino acid(in). It catalyses the reaction L-lysyl-L-alanine(out) = L-lysyl-L-alanine(in). The enzyme catalyses L-lysyl-L-lysine(out) = L-lysyl-L-lysine(in). It carries out the reaction L-lysyl-glycine(out) = L-lysyl-glycine(in). The catalysed reaction is L-alpha-aminoacyl-L-histidine(out) = L-alpha-aminoacyl-L-histidine(in). It catalyses the reaction L-histidyl-L-alpha-amino acid(out) = L-histidyl-L-alpha-amino acid(in). The enzyme catalyses L-histidyl-glycine(out) = L-histidyl-glycine(in). Functionally, lysosomal dipeptide uniporter that selectively exports lysine, arginine or histidine-containing dipeptides with a net positive charge from the lysosome lumen into the cytosol. Could play a role in a specific type of protein O-glycosylation indirectly regulating macrophages migration and tissue invasion. Also essential for liver homeostasis. This Gallus gallus (Chicken) protein is Lysosomal dipeptide transporter MFSD1.